The primary structure comprises 248 residues: Probable transcriptional regulatory protein Pcar_2335 (248 aa).

This sequence belongs to the TACO1 family.

Its subcellular location is the cytoplasm. The sequence is that of Probable transcriptional regulatory protein Pcar_2335 from Syntrophotalea carbinolica (strain DSM 2380 / NBRC 103641 / GraBd1) (Pelobacter carbinolicus).